The primary structure comprises 455 residues: Probable 1,4-beta-D-glucan cellobiohydrolase A (455 aa).

Positions 1–17 are cleaved as a signal peptide; that stretch reads MHQRALLFSAFWTAVQA. Residue N81 is glycosylated (N-linked (GlcNAc...) asparagine). E227 acts as the Nucleophile in catalysis. Catalysis depends on E232, which acts as the Proton donor. N285 carries an N-linked (GlcNAc...) asparagine glycan.

This sequence belongs to the glycosyl hydrolase 7 (cellulase C) family.

The protein localises to the secreted. The enzyme catalyses Hydrolysis of (1-&gt;4)-beta-D-glucosidic linkages in cellulose and cellotetraose, releasing cellobiose from the non-reducing ends of the chains.. In terms of biological role, the biological conversion of cellulose to glucose generally requires three types of hydrolytic enzymes: (1) Endoglucanases which cut internal beta-1,4-glucosidic bonds; (2) Exocellobiohydrolases that cut the disaccharide cellobiose from the non-reducing end of the cellulose polymer chain; (3) Beta-1,4-glucosidases which hydrolyze the cellobiose and other short cello-oligosaccharides to glucose. The protein is Probable 1,4-beta-D-glucan cellobiohydrolase A (cbhA) of Aspergillus flavus (strain ATCC 200026 / FGSC A1120 / IAM 13836 / NRRL 3357 / JCM 12722 / SRRC 167).